Consider the following 1120-residue polypeptide: Prophage side tail fiber protein homolog StfR (1120 aa).

3 disordered regions span residues 129–154 (KSASDASTSAREAATHAADAADSARA), 221–442 (SAST…ATRA), and 960–1021 (SGRA…AGAH). Composition is skewed to low complexity over residues 221–239 (SASTATTKASEAATSARDA), 248–395 (SSET…SASA), and 402–442 (RQAS…ATRA). Polar residues predominate over residues 985–1021 (DLGTKTTSSFDYGTKSTNNTGAHTHSVSGSTNSAGAH).

Belongs to the tail fiber family.

This Escherichia coli (strain K12) protein is Prophage side tail fiber protein homolog StfR (stfR).